We begin with the raw amino-acid sequence, 218 residues long: tRNA (guanine-N(7)-)-methyltransferase (218 aa).

4 residues coordinate S-adenosyl-L-methionine: Glu-46, Glu-71, Asp-98, and Asp-120. Asp-120 is an active-site residue. Residue Lys-124 coordinates substrate. An interaction with RNA region spans residues 126–131 (RHEKRR). Residues Asp-156 and 196-199 (TEYE) contribute to the substrate site.

It belongs to the class I-like SAM-binding methyltransferase superfamily. TrmB family.

It carries out the reaction guanosine(46) in tRNA + S-adenosyl-L-methionine = N(7)-methylguanosine(46) in tRNA + S-adenosyl-L-homocysteine. It functions in the pathway tRNA modification; N(7)-methylguanine-tRNA biosynthesis. Functionally, catalyzes the formation of N(7)-methylguanine at position 46 (m7G46) in tRNA. This is tRNA (guanine-N(7)-)-methyltransferase from Lactobacillus johnsonii (strain CNCM I-12250 / La1 / NCC 533).